The following is a 261-amino-acid chain: Arcelin-5B (261 aa).

The signal sequence occupies residues 1–21 (MASSKLLSLALFLVLLTHANS). N-linked (GlcNAc...) asparagine glycosylation is found at N91 and N100. C167 and C203 are disulfide-bonded.

This sequence belongs to the leguminous lectin family. As to quaternary structure, monomer.

Seed storage. This carbohydrate-binding lectin has toxic effects on bean bruchid pests. This chain is Arcelin-5B (ARC5B), found in Phaseolus vulgaris (Kidney bean).